A 108-amino-acid chain; its full sequence is Replication restart protein PriB (108 aa).

The SSB domain maps to 8-108 (IDNSFSVMGV…LHAEQIEFID (101 aa)).

This sequence belongs to the PriB family. In terms of assembly, homodimer. Interacts with PriA and DnaT. Component of the replication restart primosome. Primosome assembly occurs via a 'hand-off' mechanism. PriA binds to replication forks, subsequently PriB then DnaT bind; DnaT then displaces ssDNA to generate the helicase loading substrate.

Involved in the restart of stalled replication forks, which reloads the replicative helicase on sites other than the origin of replication; the PriA-PriB pathway is the major replication restart pathway. During primosome assembly it facilitates complex formation between PriA and DnaT on DNA; stabilizes PriA on DNA. Stimulates the DNA unwinding activity of PriA helicase. In Haemophilus influenzae (strain ATCC 51907 / DSM 11121 / KW20 / Rd), this protein is Replication restart protein PriB.